The chain runs to 461 residues: Cysteine--tRNA ligase (461 aa).

Cys-28 contributes to the Zn(2+) binding site. Residues 30–40 (ITIYDLCHIGH) carry the 'HIGH' region motif. Residues Cys-209, His-234, and Glu-238 each contribute to the Zn(2+) site. A 'KMSKS' region motif is present at residues 266–270 (KMSKS). Lys-269 lines the ATP pocket.

This sequence belongs to the class-I aminoacyl-tRNA synthetase family. As to quaternary structure, monomer. Zn(2+) serves as cofactor.

The protein localises to the cytoplasm. The enzyme catalyses tRNA(Cys) + L-cysteine + ATP = L-cysteinyl-tRNA(Cys) + AMP + diphosphate. In Yersinia pseudotuberculosis serotype O:3 (strain YPIII), this protein is Cysteine--tRNA ligase.